A 242-amino-acid chain; its full sequence is Small ribosomal subunit protein uS2 (242 aa).

It belongs to the universal ribosomal protein uS2 family.

This Shewanella putrefaciens (strain CN-32 / ATCC BAA-453) protein is Small ribosomal subunit protein uS2.